A 331-amino-acid polypeptide reads, in one-letter code: Putative phosphoribosylaminoimidazole-succinocarboxamide synthase (331 aa).

It belongs to the SAICAR synthetase family. Highly divergent.

It carries out the reaction 5-amino-1-(5-phospho-D-ribosyl)imidazole-4-carboxylate + L-aspartate + ATP = (2S)-2-[5-amino-1-(5-phospho-beta-D-ribosyl)imidazole-4-carboxamido]succinate + ADP + phosphate + 2 H(+). It participates in purine metabolism; IMP biosynthesis via de novo pathway; 5-amino-1-(5-phospho-D-ribosyl)imidazole-4-carboxamide from 5-amino-1-(5-phospho-D-ribosyl)imidazole-4-carboxylate: step 1/2. This Archaeoglobus fulgidus (strain ATCC 49558 / DSM 4304 / JCM 9628 / NBRC 100126 / VC-16) protein is Putative phosphoribosylaminoimidazole-succinocarboxamide synthase (purC).